Reading from the N-terminus, the 226-residue chain is V-type proton ATPase subunit E 2 (226 aa).

Belongs to the V-ATPase E subunit family. In terms of assembly, V-ATPase is a heteromultimeric enzyme made up of two complexes: the ATP-hydrolytic V1 complex and the proton translocation V0 complex. The V1 complex consists of three catalytic AB heterodimers that form a heterohexamer, three peripheral stalks each consisting of EG heterodimers, one central rotor including subunits D and F, and the regulatory subunits C and H. The proton translocation complex V0 consists of the proton transport subunit a, a ring of proteolipid subunits c9c'', rotary subunit d, subunits e and f, and the accessory subunits ATP6AP1/Ac45 and ATP6AP2/PRR.

Subunit of the V1 complex of vacuolar(H+)-ATPase (V-ATPase), a multisubunit enzyme composed of a peripheral complex (V1) that hydrolyzes ATP and a membrane integral complex (V0) that translocates protons. V-ATPase is responsible for acidifying and maintaining the pH of intracellular compartments and in some cell types, is targeted to the plasma membrane, where it is responsible for acidifying the extracellular environment. This chain is V-type proton ATPase subunit E 2 (ATP6V1E2), found in Bos taurus (Bovine).